Here is a 111-residue protein sequence, read N- to C-terminus: Small ribosomal subunit protein mS38 (111 aa).

The segment covering 82–99 (RKRKKKMKKHKLRKRRKR) has biased composition (basic residues). Residues 82–111 (RKRKKKMKKHKLRKRRKREKAERRKLSQGR) are disordered. Residues 100–111 (EKAERRKLSQGR) are compositionally biased toward basic and acidic residues.

This sequence belongs to the mitochondrion-specific ribosomal protein mS38 family. In terms of assembly, component of the mitochondrial small ribosomal subunit (mt-SSU). Mature yeast 74S mitochondrial ribosomes consist of a small (37S) and a large (54S) subunit. The 37S small subunit contains a 15S ribosomal RNA (15S mt-rRNA) and 34 different proteins. The 54S large subunit contains a 21S rRNA (21S mt-rRNA) and 46 different proteins.

The protein localises to the mitochondrion. It localises to the mitochondrion inner membrane. Component of the mitochondrial ribosome (mitoribosome), a dedicated translation machinery responsible for the synthesis of mitochondrial genome-encoded proteins, including at least some of the essential transmembrane subunits of the mitochondrial respiratory chain. The mitoribosomes are attached to the mitochondrial inner membrane and translation products are cotranslationally integrated into the membrane. mS38 is also involved in the splicing of the COX1 mRNA. In Saccharomyces cerevisiae (strain ATCC 204508 / S288c) (Baker's yeast), this protein is Small ribosomal subunit protein mS38 (QRI5).